A 100-amino-acid chain; its full sequence is Sec-independent protein translocase protein TatA (100 aa).

The helical transmembrane segment at 1 to 21 (MGALKPWHIAVLVVVLILLFG) threads the bilayer. Residues 44–55 (KSLHDDDRDLAE) are compositionally biased toward basic and acidic residues. The tract at residues 44–100 (KSLHDDDRDLAEKANAQAGYQPLPPQVQQEPYPQQTPYQAPPQQQPVVDPVQRARDS) is disordered. Residues 69 to 81 (QVQQEPYPQQTPY) show a composition bias toward low complexity.

Belongs to the TatA/E family. In terms of assembly, the Tat system comprises two distinct complexes: a TatABC complex, containing multiple copies of TatA, TatB and TatC subunits, and a separate TatA complex, containing only TatA subunits. Substrates initially bind to the TatABC complex, which probably triggers association of the separate TatA complex to form the active translocon.

The protein localises to the cell membrane. Its function is as follows. Part of the twin-arginine translocation (Tat) system that transports large folded proteins containing a characteristic twin-arginine motif in their signal peptide across membranes. TatA could form the protein-conducting channel of the Tat system. In Salinispora arenicola (strain CNS-205), this protein is Sec-independent protein translocase protein TatA.